Reading from the N-terminus, the 377-residue chain is MKFELDTTQGRARRGRLIFERGTVETPAFMPVGTYGTVKGMTPEEVRATGADILLGNTFHLWLRPGEEIMRKHGDLHDFMNWQRPILTDSGGFQVFSLGDIRKITEEGVHFRSPINGEKIFLDPEKSMQIQDSLGSDVVMIFDECTPYPATEDEARKSMQMSLRWAQRSRDEFDRLENPNSLFGIIQGGVYEDLRDESLNGLVDIGFDGYAVGGLAVGEPKEDMHRILEHVCPKIPADKPRYLMGVGKPEDLVEGVRRGVDMFDCVMPTRNARNGHLFTSEGVIKIRNARHRDDTSPLDDKCDCYTCKNYSRAYLYHLDRCNEILGARLNTIHNLRYYQRLMEGLRGAIETGTLDAFVTEFYTSQGREVPEVPELTD.

Asp89 serves as the catalytic Proton acceptor. Substrate contacts are provided by residues 89-93 (DSGGF), Asp143, Gln187, and Gly214. Residues 245 to 251 (GVGKPED) form an RNA binding region. The active-site Nucleophile is the Asp264. Residues 269–273 (TRNAR) are RNA binding; important for wobble base 34 recognition. Cys302, Cys304, Cys307, and His333 together coordinate Zn(2+).

Belongs to the queuine tRNA-ribosyltransferase family. Homodimer. Within each dimer, one monomer is responsible for RNA recognition and catalysis, while the other monomer binds to the replacement base PreQ1. Zn(2+) is required as a cofactor.

It carries out the reaction 7-aminomethyl-7-carbaguanine + guanosine(34) in tRNA = 7-aminomethyl-7-carbaguanosine(34) in tRNA + guanine. It participates in tRNA modification; tRNA-queuosine biosynthesis. Functionally, catalyzes the base-exchange of a guanine (G) residue with the queuine precursor 7-aminomethyl-7-deazaguanine (PreQ1) at position 34 (anticodon wobble position) in tRNAs with GU(N) anticodons (tRNA-Asp, -Asn, -His and -Tyr). Catalysis occurs through a double-displacement mechanism. The nucleophile active site attacks the C1' of nucleotide 34 to detach the guanine base from the RNA, forming a covalent enzyme-RNA intermediate. The proton acceptor active site deprotonates the incoming PreQ1, allowing a nucleophilic attack on the C1' of the ribose to form the product. After dissociation, two additional enzymatic reactions on the tRNA convert PreQ1 to queuine (Q), resulting in the hypermodified nucleoside queuosine (7-(((4,5-cis-dihydroxy-2-cyclopenten-1-yl)amino)methyl)-7-deazaguanosine). In Shewanella halifaxensis (strain HAW-EB4), this protein is Queuine tRNA-ribosyltransferase.